A 521-amino-acid chain; its full sequence is D-aminoacyl-tRNA deacylase (521 aa).

Disordered stretches follow at residues 323 to 353 (AVGT…SEDS) and 499 to 521 (VFST…SSSS). A compositionally biased stretch (basic and acidic residues) spans 343-353 (VDAERTESEDS). Over residues 501–521 (STSSSSSSSSSSSSSSSSSSS) the composition is skewed to low complexity.

Belongs to the DtdA deacylase family. In terms of assembly, monomer. Requires Zn(2+) as cofactor.

The catalysed reaction is a D-aminoacyl-tRNA + H2O = a tRNA + a D-alpha-amino acid + H(+). It carries out the reaction glycyl-tRNA(Ala) + H2O = tRNA(Ala) + glycine + H(+). D-aminoacyl-tRNA deacylase with broad substrate specificity. By recycling D-aminoacyl-tRNA to D-amino acids and free tRNA molecules, this enzyme counteracts the toxicity associated with the formation of D-aminoacyl-tRNA entities in vivo. This chain is D-aminoacyl-tRNA deacylase, found in Haloquadratum walsbyi (strain DSM 16790 / HBSQ001).